A 162-amino-acid chain; its full sequence is Cyclic pyranopterin monophosphate synthase (162 aa).

Substrate contacts are provided by residues 79 to 81 (LCH) and 117 to 118 (ME). The active site involves aspartate 132.

Belongs to the MoaC family. In terms of assembly, homohexamer; trimer of dimers.

It catalyses the reaction (8S)-3',8-cyclo-7,8-dihydroguanosine 5'-triphosphate = cyclic pyranopterin phosphate + diphosphate. The protein operates within cofactor biosynthesis; molybdopterin biosynthesis. In terms of biological role, catalyzes the conversion of (8S)-3',8-cyclo-7,8-dihydroguanosine 5'-triphosphate to cyclic pyranopterin monophosphate (cPMP). This Bordetella petrii (strain ATCC BAA-461 / DSM 12804 / CCUG 43448) protein is Cyclic pyranopterin monophosphate synthase.